A 257-amino-acid chain; its full sequence is Hydroxyacylglutathione hydrolase (257 aa).

Zn(2+)-binding residues include His54, His56, Asp58, His59, His110, Asp131, and His169.

The protein belongs to the metallo-beta-lactamase superfamily. Glyoxalase II family. As to quaternary structure, monomer. Zn(2+) serves as cofactor.

The enzyme catalyses an S-(2-hydroxyacyl)glutathione + H2O = a 2-hydroxy carboxylate + glutathione + H(+). The protein operates within secondary metabolite metabolism; methylglyoxal degradation; (R)-lactate from methylglyoxal: step 2/2. Its function is as follows. Thiolesterase that catalyzes the hydrolysis of S-D-lactoyl-glutathione to form glutathione and D-lactic acid. The sequence is that of Hydroxyacylglutathione hydrolase from Hahella chejuensis (strain KCTC 2396).